The following is a 447-amino-acid chain: Kynureninase (447 aa).

Residues leucine 106, threonine 107, phenylalanine 134–aspartate 137, aspartate 220, histidine 223, and tyrosine 245 each bind pyridoxal 5'-phosphate. Lysine 246 carries the N6-(pyridoxal phosphate)lysine modification. Tryptophan 275 and asparagine 303 together coordinate pyridoxal 5'-phosphate.

The protein belongs to the kynureninase family. In terms of assembly, homodimer. Pyridoxal 5'-phosphate is required as a cofactor.

The protein resides in the cytoplasm. The enzyme catalyses L-kynurenine + H2O = anthranilate + L-alanine + H(+). It catalyses the reaction 3-hydroxy-L-kynurenine + H2O = 3-hydroxyanthranilate + L-alanine + H(+). It participates in amino-acid degradation; L-kynurenine degradation; L-alanine and anthranilate from L-kynurenine: step 1/1. The protein operates within cofactor biosynthesis; NAD(+) biosynthesis; quinolinate from L-kynurenine: step 2/3. Catalyzes the cleavage of L-kynurenine (L-Kyn) and L-3-hydroxykynurenine (L-3OHKyn) into anthranilic acid (AA) and 3-hydroxyanthranilic acid (3-OHAA), respectively. This Eremothecium gossypii (strain ATCC 10895 / CBS 109.51 / FGSC 9923 / NRRL Y-1056) (Yeast) protein is Kynureninase.